The primary structure comprises 391 residues: Small ribosomal subunit protein mS29 (391 aa).

The transit peptide at 1–17 (MLTGITRLFSRVQKLDP) directs the protein to the mitochondrion. The interval 30–59 (NSQVPAERPRTVSRTSDSDPAKHGEQHEGQ) is disordered. The span at 45-59 (SDSDPAKHGEQHEGQ) shows a compositional bias: basic and acidic residues. Lys-168 and Lys-200 each carry N6-acetyllysine.

This sequence belongs to the mitochondrion-specific ribosomal protein mS29 family. As to quaternary structure, component of the mitochondrial ribosome small subunit (28S) which comprises a 12S rRNA and about 30 distinct proteins. Interacts with DELE1. Interacts with NOA1.

Its subcellular location is the mitochondrion. The catalysed reaction is GTP + H2O = GDP + phosphate + H(+). As a component of the mitochondrial small ribosomal subunit, it plays a role in the translation of mitochondrial mRNAs. Involved in mediating interferon-gamma-induced cell death. Displays GTPase activity in vitro. The polypeptide is Small ribosomal subunit protein mS29 (Mus musculus (Mouse)).